A 212-amino-acid polypeptide reads, in one-letter code: Octanoyltransferase (212 aa).

In terms of domain architecture, BPL/LPL catalytic spans 31 to 209 (AETQDEIWLV…HFADLLGYNI (179 aa)). Residues 70 to 77 (RGGQITYH), 138 to 140 (SLG), and 151 to 153 (GLA) contribute to the substrate site. C169 acts as the Acyl-thioester intermediate in catalysis.

It belongs to the LipB family.

The protein localises to the cytoplasm. The catalysed reaction is octanoyl-[ACP] + L-lysyl-[protein] = N(6)-octanoyl-L-lysyl-[protein] + holo-[ACP] + H(+). It participates in protein modification; protein lipoylation via endogenous pathway; protein N(6)-(lipoyl)lysine from octanoyl-[acyl-carrier-protein]: step 1/2. Functionally, catalyzes the transfer of endogenously produced octanoic acid from octanoyl-acyl-carrier-protein onto the lipoyl domains of lipoate-dependent enzymes. Lipoyl-ACP can also act as a substrate although octanoyl-ACP is likely to be the physiological substrate. The chain is Octanoyltransferase from Haemophilus influenzae (strain PittGG).